The sequence spans 157 residues: Ribonuclease H (157 aa).

The 142-residue stretch at 3-144 (ELKQLYIFTD…CDVLARKAAE (142 aa)) folds into the RNase H type-1 domain. Residues D12, E50, D72, and D136 each coordinate Mg(2+).

It belongs to the RNase H family. In terms of assembly, monomer. Requires Mg(2+) as cofactor.

The protein localises to the cytoplasm. The catalysed reaction is Endonucleolytic cleavage to 5'-phosphomonoester.. Functionally, endonuclease that specifically degrades the RNA of RNA-DNA hybrids. This chain is Ribonuclease H, found in Shewanella frigidimarina (strain NCIMB 400).